The primary structure comprises 421 residues: 3-isopropylmalate dehydratase large subunit (421 aa).

[4Fe-4S] cluster-binding residues include Cys-302, Cys-362, and Cys-365.

Belongs to the aconitase/IPM isomerase family. LeuC type 2 subfamily. As to quaternary structure, heterodimer of LeuC and LeuD. The cofactor is [4Fe-4S] cluster.

It carries out the reaction (2R,3S)-3-isopropylmalate = (2S)-2-isopropylmalate. The protein operates within amino-acid biosynthesis; L-leucine biosynthesis; L-leucine from 3-methyl-2-oxobutanoate: step 2/4. Its function is as follows. Catalyzes the isomerization between 2-isopropylmalate and 3-isopropylmalate, via the formation of 2-isopropylmaleate. This chain is 3-isopropylmalate dehydratase large subunit, found in Campylobacter fetus subsp. fetus (strain 82-40).